We begin with the raw amino-acid sequence, 498 residues long: ATP synthase subunit beta, chloroplastic (498 aa).

172-179 (GGAGVGKT) is a binding site for ATP.

The protein belongs to the ATPase alpha/beta chains family. As to quaternary structure, F-type ATPases have 2 components, CF(1) - the catalytic core - and CF(0) - the membrane proton channel. CF(1) has five subunits: alpha(3), beta(3), gamma(1), delta(1), epsilon(1). CF(0) has four main subunits: a(1), b(1), b'(1) and c(9-12).

Its subcellular location is the plastid. It localises to the chloroplast thylakoid membrane. It catalyses the reaction ATP + H2O + 4 H(+)(in) = ADP + phosphate + 5 H(+)(out). In terms of biological role, produces ATP from ADP in the presence of a proton gradient across the membrane. The catalytic sites are hosted primarily by the beta subunits. This chain is ATP synthase subunit beta, chloroplastic, found in Nicotiana bigelovii (Bigelov's tobacco).